The following is a 294-amino-acid chain: 4-hydroxy-tetrahydrodipicolinate synthase (294 aa).

T49 is a binding site for pyruvate. Y136 acts as the Proton donor/acceptor in catalysis. K164 functions as the Schiff-base intermediate with substrate in the catalytic mechanism. Position 207 (I207) interacts with pyruvate.

The protein belongs to the DapA family. Homotetramer; dimer of dimers.

It localises to the cytoplasm. The catalysed reaction is L-aspartate 4-semialdehyde + pyruvate = (2S,4S)-4-hydroxy-2,3,4,5-tetrahydrodipicolinate + H2O + H(+). The protein operates within amino-acid biosynthesis; L-lysine biosynthesis via DAP pathway; (S)-tetrahydrodipicolinate from L-aspartate: step 3/4. Catalyzes the condensation of (S)-aspartate-beta-semialdehyde [(S)-ASA] and pyruvate to 4-hydroxy-tetrahydrodipicolinate (HTPA). The protein is 4-hydroxy-tetrahydrodipicolinate synthase of Natronomonas pharaonis (strain ATCC 35678 / DSM 2160 / CIP 103997 / JCM 8858 / NBRC 14720 / NCIMB 2260 / Gabara) (Halobacterium pharaonis).